The following is a 246-amino-acid chain: Small ribosomal subunit protein uS2 (246 aa).

A disordered region spans residues 224-246; sequence AKQGEEEAEAAEETAPETETTTA. Residues 229–239 are compositionally biased toward acidic residues; sequence EEAEAAEETAP.

The protein belongs to the universal ribosomal protein uS2 family.

In Bacillus velezensis (strain DSM 23117 / BGSC 10A6 / LMG 26770 / FZB42) (Bacillus amyloliquefaciens subsp. plantarum), this protein is Small ribosomal subunit protein uS2.